A 499-amino-acid chain; its full sequence is Lysine--tRNA ligase (499 aa).

Mg(2+) contacts are provided by E408 and E415.

Belongs to the class-II aminoacyl-tRNA synthetase family. As to quaternary structure, homodimer. Mg(2+) is required as a cofactor.

It is found in the cytoplasm. The catalysed reaction is tRNA(Lys) + L-lysine + ATP = L-lysyl-tRNA(Lys) + AMP + diphosphate. This is Lysine--tRNA ligase from Bacillus cereus (strain B4264).